Consider the following 257-residue polypeptide: Zinc transporter ZupT (257 aa).

A run of 3 helical transmembrane segments spans residues 5-25 (LILTILAGAATFIGAFLGVLG), 32-52 (LLAFSLGFAAGIMLLISLMEM), and 61-81 (GMSPVLGYGMFIFGLLGYFGL). Fe(2+) is bound by residues Asn-120 and Glu-123. Residues Glu-123 and His-148 each coordinate Zn(2+). 4 helical membrane-spanning segments follow: residues 137–157 (LGFGIALAVALHNIPEGLAVA), 171–191 (ILWAGISGLAEILGGVLAWLI), 195–215 (MISPVVMAAIMAAVAGIMVAL), and 236–256 (GVLCGMSVMGFSLVLLQTVGI). Residues Asn-149, Glu-152, and Glu-181 each contribute to the Fe(2+) site. Glu-152 serves as a coordination point for Zn(2+).

The protein belongs to the ZIP transporter (TC 2.A.5) family. ZupT subfamily.

The protein localises to the cell inner membrane. It carries out the reaction Zn(2+)(in) = Zn(2+)(out). Its function is as follows. Mediates zinc uptake. May also transport other divalent cations. The chain is Zinc transporter ZupT from Escherichia coli O81 (strain ED1a).